A 331-amino-acid polypeptide reads, in one-letter code: Phosphate acyltransferase (331 aa).

The protein belongs to the PlsX family. In terms of assembly, homodimer. Probably interacts with PlsY.

Its subcellular location is the cytoplasm. It carries out the reaction a fatty acyl-[ACP] + phosphate = an acyl phosphate + holo-[ACP]. It participates in lipid metabolism; phospholipid metabolism. In terms of biological role, catalyzes the reversible formation of acyl-phosphate (acyl-PO(4)) from acyl-[acyl-carrier-protein] (acyl-ACP). This enzyme utilizes acyl-ACP as fatty acyl donor, but not acyl-CoA. In Lactococcus lactis subsp. cremoris (strain SK11), this protein is Phosphate acyltransferase.